The following is a 302-amino-acid chain: Sulfotransferase 1C4 (302 aa).

Residue 55–60 coordinates 3'-phosphoadenylyl sulfate; the sequence is KAGTTW. Position 113-115 (113-115) interacts with substrate; that stretch reads KTH. Residue H115 is the Proton acceptor of the active site. Residues R137, S145, Y200, 234–239, and 262–266 contribute to the 3'-phosphoadenylyl sulfate site; these read TSFDVM and FMRKG.

The protein belongs to the sulfotransferase 1 family. As to expression, expressed at high levels in fetal lung and kidney and at low levels in fetal heart, adult kidney, ovary and spinal cord.

Its subcellular location is the cytoplasm. It is found in the cytosol. It catalyses the reaction a phenol + 3'-phosphoadenylyl sulfate = an aryl sulfate + adenosine 3',5'-bisphosphate + H(+). The catalysed reaction is 17beta-estradiol + 3'-phosphoadenylyl sulfate = 17beta-estradiol 3-sulfate + adenosine 3',5'-bisphosphate + H(+). It carries out the reaction bisphenol A + 3'-phosphoadenylyl sulfate = bisphenyl A sulfate + adenosine 3',5'-bisphosphate + H(+). Its function is as follows. Sulfotransferase that utilizes 3'-phospho-5'-adenylyl sulfate (PAPS) as sulfonate donor to catalyze the sulfate conjugation of phenolic compounds. Can also sulfonate estrogenic compounds, however, the dietary flavonoids (phytoestrogen) and environmental estrogens, like bisphenol A are better substrates than 17beta-estradiol (E2). Mediates the sulfation of doxorubicin and its analog epirubicin, two antitumor anthracyclines. The sequence is that of Sulfotransferase 1C4 from Homo sapiens (Human).